Consider the following 607-residue polypeptide: UvrABC system protein C (607 aa).

The region spanning 15–93 (RKPGVYRMLD…IKELKPPYNI (79 aa)) is the GIY-YIG domain. The 36-residue stretch at 203-238 (REVADQLSTDMEAAAAALEFEKAALLRDQLAAIQAV) folds into the UVR domain. Basic residues predominate over residues 542–551 (HRARRGKARK). Residues 542–561 (HRARRGKARKQSTLDEIPGI) form a disordered region.

The protein belongs to the UvrC family. In terms of assembly, interacts with UvrB in an incision complex.

It is found in the cytoplasm. Functionally, the UvrABC repair system catalyzes the recognition and processing of DNA lesions. UvrC both incises the 5' and 3' sides of the lesion. The N-terminal half is responsible for the 3' incision and the C-terminal half is responsible for the 5' incision. In Alcanivorax borkumensis (strain ATCC 700651 / DSM 11573 / NCIMB 13689 / SK2), this protein is UvrABC system protein C.